The following is a 530-amino-acid chain: Meiosis 1 arrest protein (530 aa).

The disordered stretch occupies residues 463–530 (LHPHWESRAP…SEWEKDPSRP (68 aa)). Positions 503–516 (ASKMPAASKSSSDA) are enriched in low complexity.

The protein resides in the cytoplasm. Required for meiosis I progression during spermatogenesis. In Homo sapiens (Human), this protein is Meiosis 1 arrest protein (M1AP).